The chain runs to 163 residues: Lipoprotein signal peptidase (163 aa).

Helical transmembrane passes span 11-31 (ILIAVFVVIFDQVTKYIIATT), 63-83 (KMTFFFIITIIILIALVYFFI), and 88-108 (YNLFMQVAISLLFAGALGNFI). Catalysis depends on residues Asp-118 and Asp-136. The chain crosses the membrane as a helical span at residues 131 to 151 (IFNIADSSLTIGVILIIIALL).

This sequence belongs to the peptidase A8 family.

Its subcellular location is the cell membrane. The enzyme catalyses Release of signal peptides from bacterial membrane prolipoproteins. Hydrolyzes -Xaa-Yaa-Zaa-|-(S,diacylglyceryl)Cys-, in which Xaa is hydrophobic (preferably Leu), and Yaa (Ala or Ser) and Zaa (Gly or Ala) have small, neutral side chains.. It functions in the pathway protein modification; lipoprotein biosynthesis (signal peptide cleavage). In terms of biological role, this protein specifically catalyzes the removal of signal peptides from prolipoproteins. The polypeptide is Lipoprotein signal peptidase (Staphylococcus aureus (strain MRSA252)).